Here is a 451-residue protein sequence, read N- to C-terminus: Putative metabolite transport protein YyaJ (451 aa).

Residues Met1 to His29 lie on the Cytoplasmic side of the membrane. Residues Phe30–Leu50 traverse the membrane as a helical segment. Residues Ser51–His60 lie on the Extracellular side of the membrane. A helical transmembrane segment spans residues Trp61–Leu81. At Gly82–Lys97 the chain is on the cytoplasmic side. The chain crosses the membrane as a helical span at residues Ala98 to Asp118. Over Ile119–Thr124 the chain is Extracellular. The chain crosses the membrane as a helical span at residues Phe125–Ala145. The Cytoplasmic segment spans residues Glu146–Ile157. The helical transmembrane segment at Ser158–Val178 threads the bilayer. The Extracellular portion of the chain corresponds to Ile179–Gly182. Residues Ser183–Ile203 form a helical membrane-spanning segment. Residues His204–Thr270 are Cytoplasmic-facing. A helical transmembrane segment spans residues Ile271 to Val291. Residues Pro292 to Thr305 lie on the Extracellular side of the membrane. A helical transmembrane segment spans residues Leu306–Ile326. Residues Ser327 to Lys333 lie on the Cytoplasmic side of the membrane. A helical transmembrane segment spans residues Trp334–Phe354. The Extracellular portion of the chain corresponds to Ile355–Ile357. The chain crosses the membrane as a helical span at residues Met358–Tyr378. At Ala379–Leu396 the chain is on the cytoplasmic side. A helical membrane pass occupies residues Ala397 to Val417. The Extracellular segment spans residues Gln418–Tyr421. Residues Ile422–Phe442 form a helical membrane-spanning segment. The Cytoplasmic segment spans residues Gly443–Ile451.

This sequence belongs to the major facilitator superfamily. Sugar transporter (TC 2.A.1.1) family.

The protein resides in the cell membrane. The sequence is that of Putative metabolite transport protein YyaJ (yyaJ) from Bacillus subtilis (strain 168).